Reading from the N-terminus, the 292-residue chain is Hypersensitive-induced response protein 4 (292 aa).

A lipid anchor (N-myristoyl glycine) is attached at Gly-2.

In terms of assembly, self-interacts and forms heteromers. Interacts with NB-LRR class of R proteins before R proteins (e.g. RPS2 or RPM1) are activated by the effectors.

The protein resides in the cell membrane. This Arabidopsis thaliana (Mouse-ear cress) protein is Hypersensitive-induced response protein 4 (HIR4).